The following is a 348-amino-acid chain: Phenylalanine--tRNA ligase alpha subunit (348 aa).

Glu259 is a Mg(2+) binding site.

This sequence belongs to the class-II aminoacyl-tRNA synthetase family. Phe-tRNA synthetase alpha subunit type 1 subfamily. As to quaternary structure, tetramer of two alpha and two beta subunits. Mg(2+) serves as cofactor.

The protein localises to the cytoplasm. It carries out the reaction tRNA(Phe) + L-phenylalanine + ATP = L-phenylalanyl-tRNA(Phe) + AMP + diphosphate + H(+). This chain is Phenylalanine--tRNA ligase alpha subunit, found in Enterococcus faecalis (strain ATCC 700802 / V583).